Reading from the N-terminus, the 672-residue chain is uncharacterized protein (672 aa).

The signal sequence occupies residues 1-24 (MKTLKTLKIFIIICIASVSLASFA). 6 helical membrane-spanning segments follow: residues 226-246 (IIGA…ALNK), 254-274 (IALF…LGPL), 410-430 (IILA…LYFI), 436-456 (CMIT…MALF), 469-489 (VCIS…LLIT), and 562-582 (VVSI…FYYF). The tract at residues 626-672 (ASQGKPSVGDKPDVGGKRKEGEQQGGDSESGAGGGLADLASGSGGGK) is disordered. Residues 633-647 (VGDKPDVGGKRKEGE) are compositionally biased toward basic and acidic residues. Positions 656-672 (GAGGGLADLASGSGGGK) are enriched in gly residues.

It belongs to the TrbL/VirB6 family.

Its subcellular location is the cell membrane. This is an uncharacterized protein from Rickettsia felis (strain ATCC VR-1525 / URRWXCal2) (Rickettsia azadi).